The sequence spans 321 residues: Ribosomal RNA small subunit methyltransferase H (321 aa).

Residues 29 to 31 (GGH), Asp48, Tyr76, Asp97, and Gln104 contribute to the S-adenosyl-L-methionine site. The segment at 277 to 321 (LTRGAEPASETEKAENPRAASVRLRAVERTAPNPDHTRKPTGGAS) is disordered.

This sequence belongs to the methyltransferase superfamily. RsmH family.

It localises to the cytoplasm. The catalysed reaction is cytidine(1402) in 16S rRNA + S-adenosyl-L-methionine = N(4)-methylcytidine(1402) in 16S rRNA + S-adenosyl-L-homocysteine + H(+). Its function is as follows. Specifically methylates the N4 position of cytidine in position 1402 (C1402) of 16S rRNA. The chain is Ribosomal RNA small subunit methyltransferase H from Frankia casuarinae (strain DSM 45818 / CECT 9043 / HFP020203 / CcI3).